The chain runs to 296 residues: Telomere repeat-binding factor 4 (296 aa).

One can recognise an HTH myb-type domain in the interval 1 to 62 (MGNQKLKWTA…WRNLSVAPGI (62 aa)). The H-T-H motif DNA-binding region spans 28 to 58 (WKNILRDPELAEQLSSRSNIDLKDKWRNLSV). The H15 domain maps to 126–200 (NAPRYDGMIF…STQNFYKMND (75 aa)). The disordered stretch occupies residues 197-232 (KMNDNSLVQRTPHVARPKESNTKSRQQTNSQGPSIS). The segment covering 219 to 232 (KSRQQTNSQGPSIS) has biased composition (polar residues). Residues 245–282 (KLVEVENKLDVSKGAAEEIERLMKLAEEADEMLVIARE) are a coiled coil.

Belongs to the histone H1/H5 family. SMH subfamily.

Its subcellular location is the nucleus. It is found in the chromosome. Its function is as follows. Binds preferentially double-stranded telomeric repeats. The sequence is that of Telomere repeat-binding factor 4 from Arabidopsis thaliana (Mouse-ear cress).